The following is a 32-amino-acid chain: Secreted proteinase (32 aa).

The interval 1–32 is disordered; that stretch reads DTANDPKYGSQYAPQKVNADVDQGVXXXHPEL. Aspartate 22 serves as the catalytic Charge relay system.

Belongs to the peptidase S8 family.

The protein localises to the secreted. This Haloferax mediterranei (Halobacterium mediterranei) protein is Secreted proteinase.